Consider the following 643-residue polypeptide: Methyl-accepting chemotaxis protein McpA (643 aa).

The helical transmembrane segment at 24 to 44 (ILLSACGVVVLAFALFTLYND) threads the bilayer. A Cache domain is found at 49–273 (NTIRQNIEAS…GLPSAQWYIG (225 aa)). A helical membrane pass occupies residues 293-313 (IIAMLIAVAAIAGLLGLLIPV). Residues 312 to 366 (PVLMSPLTTMGRAMRDIAEGEGDLTRRLAVQNKDEFGELATSFNRFVERIHASIS) enclose the HAMP domain. One can recognise a Methyl-accepting transducer domain in the interval 371 to 607 (ATRLVHDLSE…SLNLDITQIN (237 aa)).

Belongs to the methyl-accepting chemotaxis (MCP) protein family.

It localises to the cell membrane. In terms of biological role, chemotactic-signal transducers respond to changes in the concentration of attractants and repellents in the environment, transduce a signal from the outside to the inside of the cell, and facilitate sensory adaptation through the variation of the level of methylation. McpA is a chemoreceptor that binds to 12 different L-amino acids and mediates chemotaxis toward these amino acids. The protein is Methyl-accepting chemotaxis protein McpA of Pseudomonas putida (strain ATCC 47054 / DSM 6125 / CFBP 8728 / NCIMB 11950 / KT2440).